The following is a 208-amino-acid chain: Large ribosomal subunit protein bL25 (208 aa).

It belongs to the bacterial ribosomal protein bL25 family. CTC subfamily. As to quaternary structure, part of the 50S ribosomal subunit; part of the 5S rRNA/L5/L18/L25 subcomplex. Contacts the 5S rRNA. Binds to the 5S rRNA independently of L5 and L18.

Functionally, this is one of the proteins that binds to the 5S RNA in the ribosome where it forms part of the central protuberance. The polypeptide is Large ribosomal subunit protein bL25 (Paracoccus denitrificans (strain Pd 1222)).